A 392-amino-acid chain; its full sequence is BURP domain protein RD22 (392 aa).

A signal peptide spans 1–22 (MAIRLPLICLLGSFMVVAIAAD). 4 TXV repeats span residues 56–58 (TNV), 78–80 (TAV), 100–102 (THV), and 125–127 (TDV). The 5 X approximate repeats stretch occupies residues 57-164 (NVQVGKGGVN…PFVYNYAAKE (108 aa)). Positions 61 to 136 (GKGGVNVNTH…VGVGKGGVTV (76 aa)) are disordered. Over residues 94 to 114 (GKPGGGTHVSVGSGKGHGGGV) the composition is skewed to gly residues. Positions 176–392 (FFLEKDLVRG…PETHVVWFSY (217 aa)) constitute a BURP domain.

Expressed in seed. Highest expression in leaves and guard cells.

In terms of biological role, acts to suppress chlorophyll degradation under moisture stress. This Arabidopsis thaliana (Mouse-ear cress) protein is BURP domain protein RD22.